The chain runs to 277 residues: Probable endonuclease 4 (277 aa).

Positions 67, 107, 141, 173, 176, 210, 223, 225, and 255 each coordinate Zn(2+).

Belongs to the AP endonuclease 2 family. Zn(2+) is required as a cofactor.

The enzyme catalyses Endonucleolytic cleavage to 5'-phosphooligonucleotide end-products.. In terms of biological role, endonuclease IV plays a role in DNA repair. It cleaves phosphodiester bonds at apurinic or apyrimidinic (AP) sites, generating a 3'-hydroxyl group and a 5'-terminal sugar phosphate. The polypeptide is Probable endonuclease 4 (Haloarcula marismortui (strain ATCC 43049 / DSM 3752 / JCM 8966 / VKM B-1809) (Halobacterium marismortui)).